A 115-amino-acid chain; its full sequence is MTGPARSGAAIRGAGRTVARGLIFLIQLYRHMVSPLRPATCRFVPTCSQYAVDALDEYGLIRGSWLAAARLTKCGPWHQGGWDPIPERPGCRVNCQDASDAWAVRATRGESGSLV.

Belongs to the UPF0161 family.

It localises to the cell membrane. In terms of biological role, could be involved in insertion of integral membrane proteins into the membrane. The sequence is that of Putative membrane protein insertion efficiency factor from Mycobacterium avium (strain 104).